The primary structure comprises 264 residues: Thymidylate synthase (264 aa).

A dUMP-binding site is contributed by Arg-21. His-51 is a (6R)-5,10-methylene-5,6,7,8-tetrahydrofolate binding site. 126-127 (RR) lines the dUMP pocket. Cys-146 acts as the Nucleophile in catalysis. DUMP is bound by residues 166 to 169 (RSVD), Asn-177, and 207 to 209 (HLY). Asp-169 contributes to the (6R)-5,10-methylene-5,6,7,8-tetrahydrofolate binding site. Ala-263 contacts (6R)-5,10-methylene-5,6,7,8-tetrahydrofolate.

It belongs to the thymidylate synthase family. Bacterial-type ThyA subfamily. As to quaternary structure, homodimer.

It localises to the cytoplasm. It carries out the reaction dUMP + (6R)-5,10-methylene-5,6,7,8-tetrahydrofolate = 7,8-dihydrofolate + dTMP. The protein operates within pyrimidine metabolism; dTTP biosynthesis. In terms of biological role, catalyzes the reductive methylation of 2'-deoxyuridine-5'-monophosphate (dUMP) to 2'-deoxythymidine-5'-monophosphate (dTMP) while utilizing 5,10-methylenetetrahydrofolate (mTHF) as the methyl donor and reductant in the reaction, yielding dihydrofolate (DHF) as a by-product. This enzymatic reaction provides an intracellular de novo source of dTMP, an essential precursor for DNA biosynthesis. This Geobacillus sp. (strain WCH70) protein is Thymidylate synthase.